Here is a 610-residue protein sequence, read N- to C-terminus: Modifier of mdg4 (610 aa).

Residues 1 to 160 form a self-association region; it reads MADDEQFSLC…QQPRASARYK (160 aa). An interaction with Chi region spans residues 1–308; sequence MADDEQFSLC…EEAEYIDLPM (308 aa). The 67-residue stretch at 32–98 folds into the BTB domain; it reads VDVSLAAEGQ…MYCGEVNVKQ (67 aa). Disordered stretches follow at residues 115–156, 219–259, 311–339, and 386–432; these read GLTD…PRAS, VSTN…DSTT, PTKS…DDTY, and ESSF…PKPK. The span at 122-135 shows a compositional bias: pro residues; the sequence is APQPPQESSPPPAA. Residues 136-156 show a composition bias toward low complexity; that stretch reads PHVQQQQIPAQRVQRQQPRAS. Over residues 222-238 the composition is skewed to polar residues; the sequence is NKRSAQRSSLTPASSSA. S230 is modified (phosphoserine). Residues 312–325 show a composition bias toward basic and acidic residues; it reads TKSEPDYSEDHGDA. A compositionally biased stretch (polar residues) spans 386–400; the sequence is ESSFVDTSGDQGNTE. The span at 401–410 shows a compositional bias: low complexity; the sequence is AQAATSASAT. Over residues 422–432 the composition is skewed to basic and acidic residues; the sequence is TKVEDQTPKPK. An FLYWCH-type zinc finger spans residues 452-512; sequence YASTTKGGVK…VFPYEGEHVH (61 aa). Positions 551–610 are interaction with su(Hw); that stretch reads LEEADDKEDEDFEEFEIQEIDEIELDEPEKTPAKEEEVDPNDFREKIKRRLQKALQNKKK. Positions 567–577 are enriched in acidic residues; sequence IQEIDEIELDE. A disordered region spans residues 567–595; it reads IQEIDEIELDEPEKTPAKEEEVDPNDFRE. Over residues 578 to 595 the composition is skewed to basic and acidic residues; that stretch reads PEKTPAKEEEVDPNDFRE.

Can self-associate. Interacts with Chi. Interacts with Top2. Isoform mod2.2: Component of the gypsy chromatin insulator complex, composed of Cp190, mod(mdg4) and su(Hw). The gypsy chromatin insulator complex interacts with Topors via mod(mdg4) and su(Hw). Isoform mod2.2 interacts with Trl/GAGA and interaction with this protein may bypass the repressive effects of the su(Hw) insulator.

Its subcellular location is the nucleus. It localises to the chromosome. Its function is as follows. Component of the gypsy chromatin insulator complex which is required for the function of the gypsy chromatin insulator and other endogenous chromatin insulators. Chromatin insulators are regulatory elements which establish independent domains of transcriptional activity within eukaryotic genomes. Insulators have two defining properties; they can block the communication between an enhancer and a promoter when placed between them and can also buffer transgenes from position effect variegation (PEV). Insulators are proposed to structure the chromatin fiber into independent domains of differing transcriptional potential by promoting the formation of distinct chromatin loops. This chromatin looping may involve the formation of insulator bodies, where homotypic interactions between individual subunits of the insulator complex could promote the clustering of widely spaced insulators at the nuclear periphery. Within the gypsy insulator complex, this protein may control the nature of the repressive effect of su(Hw): in the absence of mod(mdg4) protein, su(Hw) exerts a bidirectional silencing effect, whereas in the presence of mod(mdg4), the silencing effect is unidirectional. Isoform H is specifically required to maintain the pairing of achiasmate homologs in male meiosis I which is mediated by the rDNA repeats on the achiasmate X-Y bivalents. Isoform H also plays a role in apoptotic regulatory pathways. The protein is Modifier of mdg4 of Drosophila melanogaster (Fruit fly).